Consider the following 361-residue polypeptide: Porphobilinogen deaminase (361 aa).

Ser2 is modified (N-acetylserine). At Ser69 the chain carries Phosphoserine. N6-acetyllysine is present on Lys74. A Phosphoserine modification is found at Ser147. An S-(dipyrrolylmethanemethyl)cysteine modification is found at Cys261.

Belongs to the HMBS family. Monomer. Requires dipyrromethane as cofactor.

It is found in the cytoplasm. The protein resides in the cytosol. It catalyses the reaction 4 porphobilinogen + H2O = hydroxymethylbilane + 4 NH4(+). Its pathway is porphyrin-containing compound metabolism; protoporphyrin-IX biosynthesis; coproporphyrinogen-III from 5-aminolevulinate: step 2/4. Functionally, as part of the heme biosynthetic pathway, catalyzes the sequential polymerization of four molecules of porphobilinogen to form hydroxymethylbilane, also known as preuroporphyrinogen. Catalysis begins with the assembly of the dipyrromethane cofactor by the apoenzyme from two molecules of porphobilinogen or from preuroporphyrinogen. The covalently linked cofactor acts as a primer, around which the tetrapyrrole product is assembled. In the last step of catalysis, the product, preuroporphyrinogen, is released, leaving the cofactor bound to the holodeaminase intact. This is Porphobilinogen deaminase (Hmbs) from Mus musculus (Mouse).